A 226-amino-acid chain; its full sequence is Small ribosomal subunit protein uS3 (226 aa).

Residues 39–107 enclose the KH type-2 domain; it reads IRKFIKNKLY…NILINITEIK (69 aa).

This sequence belongs to the universal ribosomal protein uS3 family. Part of the 30S ribosomal subunit. Forms a tight complex with proteins S10 and S14.

Its function is as follows. Binds the lower part of the 30S subunit head. Binds mRNA in the 70S ribosome, positioning it for translation. This Acetivibrio thermocellus (strain ATCC 27405 / DSM 1237 / JCM 9322 / NBRC 103400 / NCIMB 10682 / NRRL B-4536 / VPI 7372) (Clostridium thermocellum) protein is Small ribosomal subunit protein uS3.